Consider the following 214-residue polypeptide: tRNA (guanine-N(7)-)-methyltransferase (214 aa).

S-adenosyl-L-methionine is bound by residues Glu43, Glu68, Asp95, and Asp117. Asp117 is a catalytic residue. Residues Lys121, Asp153, and 191–194 (TEYE) each bind substrate.

Belongs to the class I-like SAM-binding methyltransferase superfamily. TrmB family.

The enzyme catalyses guanosine(46) in tRNA + S-adenosyl-L-methionine = N(7)-methylguanosine(46) in tRNA + S-adenosyl-L-homocysteine. The protein operates within tRNA modification; N(7)-methylguanine-tRNA biosynthesis. In terms of biological role, catalyzes the formation of N(7)-methylguanine at position 46 (m7G46) in tRNA. This is tRNA (guanine-N(7)-)-methyltransferase from Brevibacillus brevis (strain 47 / JCM 6285 / NBRC 100599).